We begin with the raw amino-acid sequence, 230 residues long: Orotidine 5'-phosphate decarboxylase (230 aa).

Substrate-binding positions include Asp10, Lys32, 59–68 (DLKYHDIPNT), Thr119, Arg180, Gln189, Gly209, and Arg210. Lys61 serves as the catalytic Proton donor.

This sequence belongs to the OMP decarboxylase family. Type 1 subfamily. Homodimer.

The enzyme catalyses orotidine 5'-phosphate + H(+) = UMP + CO2. It participates in pyrimidine metabolism; UMP biosynthesis via de novo pathway; UMP from orotate: step 2/2. Functionally, catalyzes the decarboxylation of orotidine 5'-monophosphate (OMP) to uridine 5'-monophosphate (UMP). This is Orotidine 5'-phosphate decarboxylase from Actinobacillus pleuropneumoniae serotype 5b (strain L20).